Here is a 779-residue protein sequence, read N- to C-terminus: uncharacterized protein (779 aa).

[4Fe-4S] cluster-binding residues include Cys-72 and Cys-75.

This sequence belongs to the prokaryotic molybdopterin-containing oxidoreductase family. Requires [4Fe-4S] cluster as cofactor. Mo-bis(molybdopterin guanine dinucleotide) is required as a cofactor.

This is an uncharacterized protein from Mycobacterium bovis (strain ATCC BAA-935 / AF2122/97).